A 228-amino-acid chain; its full sequence is Adapter protein MecA (228 aa).

The interval 79-98 (GQKNDDSAADQTDDEGTDTQ) is disordered. The span at 85–95 (SAADQTDDEGT) shows a compositional bias: acidic residues.

Belongs to the MecA family. As to quaternary structure, homodimer.

Functionally, enables the recognition and targeting of unfolded and aggregated proteins to the ClpC protease or to other proteins involved in proteolysis. The protein is Adapter protein MecA of Lacticaseibacillus casei (strain BL23) (Lactobacillus casei).